The primary structure comprises 35 residues: Z-limacoditoxin(1)-Dv1 (35 aa).

Positions 1 to 22 (MKKTFLPIFLVILLASYALANP) are cleaved as a signal peptide. Gln23 bears the Pyrrolidone carboxylic acid mark. Proline amide is present on Pro32.

The protein belongs to the limacoditoxin-1 (ACP-like) family. In terms of tissue distribution, expressed by the venom secretory cell of the spine. The spine is a cuticular structure containing a single large nucleated venom-secreting cell at its base. It is an independent unit capable of producing, storing and injecting venom. On the back of D.vulnerans caterpillars, spines are grouped together by 50 to 100 to form scoli, of which there are eight in D.vulnerans.

Its subcellular location is the secreted. Its function is as follows. Potently activates insect G protein-coupled receptor. It activates the ACP receptor (ACPR) from the mosquito A.aegypti (EC(50)=0.55 nM) with a potency comparable to that of the endogenous ligand. Has no activity on receptors of the closely related neuropeptides adipokinetic hormone and corazonin. In vivo, does not reveal any observable effects when injected into crickets (A.domesticus). Does not induce increase in intracellular calcium in mouse DRG neurons, suggesting that it does not induce pain. This chain is Z-limacoditoxin(1)-Dv1, found in Doratifera vulnerans (Mottled cup moth).